The following is a 162-amino-acid chain: UPF0114 protein PA4574 (162 aa).

3 helical membrane passes run Y10–I32, L53–I75, and L136–L156.

It belongs to the UPF0114 family.

It is found in the cell membrane. The polypeptide is UPF0114 protein PA4574 (Pseudomonas aeruginosa (strain ATCC 15692 / DSM 22644 / CIP 104116 / JCM 14847 / LMG 12228 / 1C / PRS 101 / PAO1)).